Here is a 326-residue protein sequence, read N- to C-terminus: NDRG-like protein (326 aa).

It belongs to the NDRG family.

The sequence is that of NDRG-like protein from Dictyostelium discoideum (Social amoeba).